Consider the following 1158-residue polypeptide: ATP-dependent helicase/deoxyribonuclease subunit B (1158 aa).

An ATP-binding site is contributed by 8–15 (GRAGTGKS). Positions 791, 1112, 1115, and 1121 each coordinate [4Fe-4S] cluster.

It belongs to the helicase family. AddB/RexB type 1 subfamily. Heterodimer of AddA and AddB. The cofactor is Mg(2+). [4Fe-4S] cluster serves as cofactor.

Its function is as follows. The heterodimer acts as both an ATP-dependent DNA helicase and an ATP-dependent, dual-direction single-stranded exonuclease. Recognizes the chi site generating a DNA molecule suitable for the initiation of homologous recombination. The AddB subunit has 5' -&gt; 3' nuclease activity but not helicase activity. This Clostridium perfringens (strain ATCC 13124 / DSM 756 / JCM 1290 / NCIMB 6125 / NCTC 8237 / Type A) protein is ATP-dependent helicase/deoxyribonuclease subunit B.